A 314-amino-acid polypeptide reads, in one-letter code: Ketimine reductase mu-crystallin (314 aa).

Arg47 contributes to the 3,3',5-triiodo-L-thyronine binding site. Positions 91, 92, 119, 144, 146, 147, 168, 169, 170, 173, 205, and 206 each coordinate NADPH. Glu257 provides a ligand contact to 3,3',5-triiodo-L-thyronine. Ser292 contacts NADPH.

It belongs to the ornithine cyclodeaminase/mu-crystallin family. As to quaternary structure, homodimer. Binds the thyroid hormone triiodothyronine (T3); T3 binding inhibits enzymatic activity.

The protein resides in the cytoplasm. It catalyses the reaction L-pipecolate + NAD(+) = Delta(1)-piperideine-2-carboxylate + NADH + H(+). The catalysed reaction is L-pipecolate + NADP(+) = Delta(1)-piperideine-2-carboxylate + NADPH + H(+). It carries out the reaction L-proline + NADP(+) = 1-pyrroline-2-carboxylate + NADPH + H(+). The enzyme catalyses L-proline + NAD(+) = 1-pyrroline-2-carboxylate + NADH + H(+). It catalyses the reaction (3R)-1,4-thiomorpholine-3-carboxylate + NAD(+) = 3,4-dehydrothiomorpholine-3-carboxylate + NADH + 2 H(+). The catalysed reaction is (3R)-1,4-thiomorpholine-3-carboxylate + NADP(+) = 3,4-dehydrothiomorpholine-3-carboxylate + NADPH + 2 H(+). It carries out the reaction (S)-cystathionine ketimine + NADH + 2 H(+) = (3R,5S)-2,3,5,6,7-pentahydro-1,4-thiazepine-3,5-dicarboxylate + NAD(+). The enzyme catalyses (S)-cystathionine ketimine + NADPH + 2 H(+) = (3R,5S)-2,3,5,6,7-pentahydro-1,4-thiazepine-3,5-dicarboxylate + NADP(+). It catalyses the reaction (R)-lanthionine ketimine + NADPH + 2 H(+) = (3R,5R)-1,4-thiomorpholine-3,5-dicarboxylate + NADP(+). The catalysed reaction is Delta(2)-thiazoline-2-carboxylate + NADPH + 2 H(+) = L-thiazolidine-2-carboxylate + NADP(+). Functionally, catalyzes the NAD(P)H-dependent reduction of imine double bonds of a number of cyclic ketimine substrates, including sulfur-containing cyclic ketimines. Under physiological conditions, it efficiently catalyzes delta(1)-piperideine-2-carboxylate (P2C) and delta(1)-pyrroline-2-carboxylate (Pyr2C) reduction, suggesting a central role in lysine and glutamate metabolism. Additional substrates are (S)-cystathionine ketimine (CysK), 3,4-dehydrothiomorpholine-3-carboxylate (AECK), and (R)-lanthionine ketimine (LK) that is reduced at very low rate compared to other substrates. Also catalyzes the NAD(P)H-dependent reduction of delta(2)-thiazoline-2-carboxylate (T2C). The chain is Ketimine reductase mu-crystallin (CRYM) from Bos taurus (Bovine).